A 210-amino-acid chain; its full sequence is Small ribosomal subunit protein uS4 (210 aa).

The tract at residues 30-49 (EKSSLEKRKYPPGLPPKKKG) is disordered. The 64-residue stretch at 99–162 (RRLDNVLYRM…QKSAFIEENI (64 aa)) folds into the S4 RNA-binding domain.

It belongs to the universal ribosomal protein uS4 family. As to quaternary structure, part of the 30S ribosomal subunit. Contacts protein S5. The interaction surface between S4 and S5 is involved in control of translational fidelity.

One of the primary rRNA binding proteins, it binds directly to 16S rRNA where it nucleates assembly of the body of the 30S subunit. Its function is as follows. With S5 and S12 plays an important role in translational accuracy. This is Small ribosomal subunit protein uS4 from Leptospira biflexa serovar Patoc (strain Patoc 1 / Ames).